The chain runs to 585 residues: Switch-associated protein 70 (585 aa).

The region spanning 210–306 is the PH domain; that stretch reads DVLKQGYMMK…WIQAIYSTIH (97 aa). Positions 316–529 form a coiled coil; that stretch reads HKEARQRRKE…VKKKLEMATH (214 aa). A disordered region spans residues 347–373; it reads ANENKQQELESVRKKLEEAASRAADEE. Residues 351 to 373 show a composition bias toward basic and acidic residues; it reads KQQELESVRKKLEEAASRAADEE.

In terms of assembly, the SWAP complex consists of NPM1, NCL, PARP1 and SWAP70. Post-translationally, tyrosine-phosphorylated. Spleen. Expressed only in B-cells that have been induced to switch to various Ig isotypes.

It localises to the cytoplasm. Its subcellular location is the cell membrane. The protein localises to the nucleus. The protein resides in the cell projection. It is found in the lamellipodium. It localises to the cytoskeleton. Its function is as follows. Phosphatidylinositol 3,4,5-trisphosphate-dependent guanine nucleotide exchange factor (GEF) which, independently of RAS, transduces signals from tyrosine kinase receptors to RAC. It also mediates signaling of membrane ruffling. Regulates the actin cytoskeleton as an effector or adapter protein in response to agonist stimulated phosphatidylinositol (3,4)-bisphosphate production and cell protrusion. This chain is Switch-associated protein 70 (Swap70), found in Mus musculus (Mouse).